Here is a 242-residue protein sequence, read N- to C-terminus: Probable 2-phosphosulfolactate phosphatase (242 aa).

Belongs to the ComB family. Mg(2+) is required as a cofactor.

The enzyme catalyses (2R)-O-phospho-3-sulfolactate + H2O = (2R)-3-sulfolactate + phosphate. The chain is Probable 2-phosphosulfolactate phosphatase from Synechococcus sp. (strain JA-2-3B'a(2-13)) (Cyanobacteria bacterium Yellowstone B-Prime).